Here is a 146-residue protein sequence, read N- to C-terminus: Large ribosomal subunit protein uL15 (146 aa).

The span at 1-10 shows a compositional bias: polar residues; the sequence is MRLNQLSPSA. The interval 1-54 is disordered; it reads MRLNQLSPSAGSRPDAKRAGRGAGSGLGKTAGRGHKGQHSRSGGFHKVGFEGGQ. The span at 21-31 shows a compositional bias: gly residues; sequence RGAGSGLGKTA.

This sequence belongs to the universal ribosomal protein uL15 family. As to quaternary structure, part of the 50S ribosomal subunit.

Its function is as follows. Binds to the 23S rRNA. In Halorhodospira halophila (strain DSM 244 / SL1) (Ectothiorhodospira halophila (strain DSM 244 / SL1)), this protein is Large ribosomal subunit protein uL15.